The following is a 617-amino-acid chain: uncharacterized protein (617 aa).

Positions 387-396 (NGGMSATQLP) are enriched in polar residues. 2 disordered regions span residues 387-419 (NGGMSATQLPAPTRDSQRQAAANQFQQRTHAAP) and 443-599 (YDDF…NNEQ). Over residues 404-414 (RQAAANQFQQR) the composition is skewed to low complexity. The segment covering 453-474 (QPLTQQQKDAARQRYQSASPEQ) has biased composition (polar residues). 2 stretches are compositionally biased toward basic and acidic residues: residues 490–499 (QRREAARERI) and 522–531 (QRRDAARERI). Over residues 549–570 (RPLNQQQRDNARQRVQSASPEQ) the composition is skewed to polar residues. Basic and acidic residues predominate over residues 572–585 (QVFREKVQESRPQR). The span at 586 to 599 (LNDSNHTVRLNNEQ) shows a compositional bias: polar residues.

This is an uncharacterized protein from Escherichia coli (strain K12).